The sequence spans 56 residues: Protein hunchback (56 aa).

3 consecutive C2H2-type zinc fingers follow at residues 1–5 (HLRNH), 11–33 (FRCDKCDYQCVNKSMLNSHLKSH), and 39–56 (YRCADCTYATKYCHSLKL).

It belongs to the hunchback C2H2-type zinc-finger protein family.

It is found in the nucleus. Its function is as follows. Gap class segmentation protein that controls development of head structures. The polypeptide is Protein hunchback (hb) (Locusta migratoria (Migratory locust)).